Here is a 172-residue protein sequence, read N- to C-terminus: Putative phosphoesterase Bcer98_0945 (172 aa).

His34 acts as the Proton donor in catalysis. 2 consecutive short sequence motifs (HXTX) follow at residues His34–Leu37 and His115–Ile118. Residue His115 is the Proton acceptor of the active site.

It belongs to the 2H phosphoesterase superfamily. YjcG family.

The sequence is that of Putative phosphoesterase Bcer98_0945 from Bacillus cytotoxicus (strain DSM 22905 / CIP 110041 / 391-98 / NVH 391-98).